Reading from the N-terminus, the 570-residue chain is Urease subunit alpha (570 aa).

The Urease domain maps to 131 to 570; that stretch reads GGFDSHIHFI…LPMAQRYFLF (440 aa). Ni(2+) is bound by residues His-136, His-138, and Lys-219. Lys-219 carries the N6-carboxylysine modification. Residue His-221 participates in substrate binding. Residues His-248 and His-274 each coordinate Ni(2+). Residue His-322 is the Proton donor of the active site. Residue Asp-362 coordinates Ni(2+).

This sequence belongs to the metallo-dependent hydrolases superfamily. Urease alpha subunit family. As to quaternary structure, heterotrimer of UreA (gamma), UreB (beta) and UreC (alpha) subunits. Three heterotrimers associate to form the active enzyme. It depends on Ni cation as a cofactor. Carboxylation allows a single lysine to coordinate two nickel ions.

It localises to the cytoplasm. The enzyme catalyses urea + 2 H2O + H(+) = hydrogencarbonate + 2 NH4(+). It functions in the pathway nitrogen metabolism; urea degradation; CO(2) and NH(3) from urea (urease route): step 1/1. In Beijerinckia indica subsp. indica (strain ATCC 9039 / DSM 1715 / NCIMB 8712), this protein is Urease subunit alpha.